A 362-amino-acid polypeptide reads, in one-letter code: UDP-N-acetylglucosamine--N-acetylmuramyl-(pentapeptide) pyrophosphoryl-undecaprenol N-acetylglucosamine transferase (362 aa).

UDP-N-acetyl-alpha-D-glucosamine is bound by residues Arg166, Ser196, and Gln290.

It belongs to the glycosyltransferase 28 family. MurG subfamily.

It localises to the cell membrane. It carries out the reaction Mur2Ac(oyl-L-Ala-gamma-D-Glu-L-Lys-D-Ala-D-Ala)-di-trans,octa-cis-undecaprenyl diphosphate + UDP-N-acetyl-alpha-D-glucosamine = beta-D-GlcNAc-(1-&gt;4)-Mur2Ac(oyl-L-Ala-gamma-D-Glu-L-Lys-D-Ala-D-Ala)-di-trans,octa-cis-undecaprenyl diphosphate + UDP + H(+). Its pathway is cell wall biogenesis; peptidoglycan biosynthesis. Its function is as follows. Cell wall formation. Catalyzes the transfer of a GlcNAc subunit on undecaprenyl-pyrophosphoryl-MurNAc-pentapeptide (lipid intermediate I) to form undecaprenyl-pyrophosphoryl-MurNAc-(pentapeptide)GlcNAc (lipid intermediate II). The polypeptide is UDP-N-acetylglucosamine--N-acetylmuramyl-(pentapeptide) pyrophosphoryl-undecaprenol N-acetylglucosamine transferase (Staphylococcus carnosus (strain TM300)).